A 132-amino-acid chain; its full sequence is Small ribosomal subunit protein uS8 (132 aa).

It belongs to the universal ribosomal protein uS8 family. As to quaternary structure, part of the 30S ribosomal subunit. Contacts proteins S5 and S12.

Functionally, one of the primary rRNA binding proteins, it binds directly to 16S rRNA central domain where it helps coordinate assembly of the platform of the 30S subunit. The chain is Small ribosomal subunit protein uS8 from Treponema pallidum (strain Nichols).